A 137-amino-acid chain; its full sequence is Nucleoside diphosphate kinase (137 aa).

ATP-binding residues include Lys9, Phe57, Arg85, Thr91, Arg102, and Asn112. His115 (pros-phosphohistidine intermediate) is an active-site residue.

It belongs to the NDK family. In terms of assembly, homotetramer. Requires Mg(2+) as cofactor.

Its subcellular location is the cytoplasm. It catalyses the reaction a 2'-deoxyribonucleoside 5'-diphosphate + ATP = a 2'-deoxyribonucleoside 5'-triphosphate + ADP. It carries out the reaction a ribonucleoside 5'-diphosphate + ATP = a ribonucleoside 5'-triphosphate + ADP. In terms of biological role, major role in the synthesis of nucleoside triphosphates other than ATP. The ATP gamma phosphate is transferred to the NDP beta phosphate via a ping-pong mechanism, using a phosphorylated active-site intermediate. In Thermus thermophilus (strain ATCC 27634 / DSM 579 / HB8), this protein is Nucleoside diphosphate kinase.